A 340-amino-acid chain; its full sequence is DNA-directed RNA polymerase subunit alpha (340 aa).

Residues 1–236 form an alpha N-terminal domain (alpha-NTD) region; sequence MLSLSKNWNT…EQLQLFISFE (236 aa). Positions 251–340 are alpha C-terminal domain (alpha-CTD); the sequence is FAPYLLKRVD…LSKRYEDSYN (90 aa).

This sequence belongs to the RNA polymerase alpha chain family. As to quaternary structure, homodimer. The RNAP catalytic core consists of 2 alpha, 1 beta, 1 beta' and 1 omega subunit. When a sigma factor is associated with the core the holoenzyme is formed, which can initiate transcription.

The enzyme catalyses RNA(n) + a ribonucleoside 5'-triphosphate = RNA(n+1) + diphosphate. Functionally, DNA-dependent RNA polymerase catalyzes the transcription of DNA into RNA using the four ribonucleoside triphosphates as substrates. The chain is DNA-directed RNA polymerase subunit alpha from Rickettsia peacockii (strain Rustic).